A 485-amino-acid polypeptide reads, in one-letter code: D-alanine--D-alanyl carrier protein ligase (485 aa).

144-145 (TS) is an ATP binding site. Position 189 (Asp189) interacts with D-alanine. 284–289 (NTYGPT) is an ATP binding site. Residue Val293 participates in D-alanine binding. ATP contacts are provided by Asp365 and Lys473. Lys473 serves as a coordination point for D-alanine.

It belongs to the ATP-dependent AMP-binding enzyme family. DltA subfamily.

It localises to the cytoplasm. The catalysed reaction is holo-[D-alanyl-carrier protein] + D-alanine + ATP = D-alanyl-[D-alanyl-carrier protein] + AMP + diphosphate. The protein operates within cell wall biogenesis; lipoteichoic acid biosynthesis. Functionally, catalyzes the first step in the D-alanylation of lipoteichoic acid (LTA), the activation of D-alanine and its transfer onto the D-alanyl carrier protein (Dcp) DltC. In an ATP-dependent two-step reaction, forms a high energy D-alanyl-AMP intermediate, followed by transfer of the D-alanyl residue as a thiol ester to the phosphopantheinyl prosthetic group of the Dcp. D-alanylation of LTA plays an important role in modulating the properties of the cell wall in Gram-positive bacteria, influencing the net charge of the cell wall. The sequence is that of D-alanine--D-alanyl carrier protein ligase from Staphylococcus aureus (strain Mu3 / ATCC 700698).